The following is a 415-amino-acid chain: Cell division control protein 11 (415 aa).

N-acetylserine is present on Ser-2. Ser-2 carries the phosphoserine modification. The short motif at 12–19 (RKRKHLKR) is the Basic motif element. Residues 19–298 (RGITFTVMIV…ERYRTEALSG (280 aa)) form the Septin-type G domain. The tract at residues 29–36 (GQSGSGRS) is G1 motif. GTP contacts are provided by residues 29 to 36 (GQSGSGRS), Gly-92, 172 to 180 (KSDSLTRDE), Gly-230, and Arg-247. The interval 89–92 (DTPG) is G3 motif. The tract at residues 171–174 (SKSD) is G4 motif. Residue Ser-305 is modified to Phosphoserine. The disordered stretch occupies residues 307-360 (RPNLTKLNGSSSSSTTTRRNTNPFKQSNNINNDVLNPASDMHGQSTGENNETYM). A compositionally biased stretch (low complexity) spans 316-328 (SSSSSTTTRRNTN). Position 327 is a phosphothreonine (Thr-327). Polar residues-rich tracts occupy residues 329–340 (PFKQSNNINNDV) and 348–359 (HGQSTGENNETY). Residues 354-414 (ENNETYMTRE…LEKEAKIKQE (61 aa)) are a coiled coil. Lys-412 participates in a covalent cross-link: Glycyl lysine isopeptide (Lys-Gly) (interchain with G-Cter in SUMO).

It belongs to the TRAFAC class TrmE-Era-EngA-EngB-Septin-like GTPase superfamily. Septin GTPase family. As to quaternary structure, component of the septin complex which consists of CDC3, CDC10, CDC11, CDC12 and probably SHS1 and rearranges to a cortical collar of highly ordered filaments at the mother-bud-neck. A complex formed by CDC3, CDC10, CDC11 and CDC12 is capable of forming long filaments in vitro and the components seem to be present in a 2:2:2:2 arrangement in vivo. The filaments are proposed to be formed by the end-to-end polymerization of CDC3-CDC12-CDC11 complexes with CDC10 serving as a bridge to bundle the polymers into paired filaments. Component of the GIN4 complex composed of at least BNI5, CDC3, CDC10, CDC11, CDC12, GIN4, NAP1 and SHS1. Self-associates. Interacts with BEM4, KCC4, SPR28 and SYP1. Interacts with BNI5. Sumoylated during mitosis on the mother cell side of the bud neck. Sumoylation probably plays a central role in regulating septin ring disassembly during the cell cycle.

It localises to the membrane. Its subcellular location is the bud neck. Its function is as follows. Septins are GTPases involved in cytokinesis that assemble early in the cell cycle as a patch at the incipient bud site and form a ring approximate 15 minutes before bud emergence, which transforms into an hour-glass shaped collar of cortical filaments that spans both sides of the mother-bud neck. This collar persists until just before cytokinesis, when it splits into two rings that occupy opposite sides of the neck. The septins at the bud neck serve as a structural scaffold that recruits different components involved in diverse processes at specific stages during the cell cycle. Many proteins bind asymmetrically to the septin collar. The septin assembly is regulated by protein kinases GIN4 and/or CLA4. May act by recruiting MYO1 and HOF1, a protein involved in septation, to the site of cleavage. Septins are also involved in cell morphogenesis, bud site selection, chitin deposition, cell cycle regulation, cell compartmentalization and spore wall formation. CDCd11 with SHS1 11 are involved in the recruitment of BNI5 and thereby ensure efficient localization at the bud neck of MYO1, the type II myosin of the actomyosin contractile ring. This is Cell division control protein 11 from Saccharomyces cerevisiae (strain ATCC 204508 / S288c) (Baker's yeast).